The primary structure comprises 736 residues: Prospero homeobox protein 1 (736 aa).

The segment covering 103–135 (KNGGTEPSFQASGLSSTGSEVHQEDVCSNSSRD) has biased composition (polar residues). Residues 103–146 (KNGGTEPSFQASGLSSTGSEVHQEDVCSNSSRDSPQECLSPFGR) are disordered. The short motif at 163–168 (RAKRAR) is the Nuclear localization signal element. 5 disordered regions span residues 180–220 (PRVA…QQQS), 261–301 (YDST…EMCE), 319–344 (EIGE…HPEG), 445–465 (NSSD…SLHQ), and 499–518 (PSAS…DLTR). Residues 264 to 274 (TDSENDEDGNL) are compositionally biased toward acidic residues. Over residues 319-335 (EIGENKPKREGPKEKDQ) the composition is skewed to basic and acidic residues. Over residues 450-460 (PASAPPAGGHH) the composition is skewed to low complexity. The span at 505–518 (GKERASPESLDLTR) shows a compositional bias: basic and acidic residues. One can recognise a Prospero-type homeo domain in the interval 576–634 (QEGLSPNHLKKAKLMFFYTRYPSSNMLKTYFSDVKFNRCITSQLIKWFSNFREFYYIQM). Positions 576 to 734 (QEGLSPNHLK…KSPNCLQELL (159 aa)) are homeo-Prospero. In terms of domain architecture, Prospero spans 635 to 734 (EKYARQAIND…KSPNCLQELL (100 aa)).

This sequence belongs to the Prospero homeodomain family. In terms of tissue distribution, expressed most actively in the developing lens and midgut and at lower levels in the developing brain, heart, muscle and retina.

The protein localises to the nucleus. In terms of biological role, transcription factor which may be involved in developmental processes such as cell fate determination, gene transcriptional regulation and progenitor cell regulation in a number of organs. May be essential in the development and function of the eye. May play a role in the regulation of the circadian rhythm by repressing the expression of clock genes. This chain is Prospero homeobox protein 1 (PROX1), found in Gallus gallus (Chicken).